The primary structure comprises 290 residues: MTFRIDAHQHFWQMASRDGYWPPQTLDAIYRDFGPQDLEPLLARSGVQRTVVVQSLPTQEDTRYLLDVASRTSFVAAVVGWVDLKSTDAPADIASLARDPKFRGIRPMLQDLADDDWIDDPVLEPAIDAMLAHDLAFDALVTPRHLPALLAFARRYPRLRIVIDHAAKPPIASGRSEAWHVAMSELAAHPNVHCKLSGLWTEAGPHPDLLRVEPYVRAVCDWFGASRLIWGSDWPVSRLAGHFGDYGAWLAWCEQCCDRFLGPDARARVFGGNACHFYRIDRPSGDQHAQ.

The protein belongs to the metallo-dependent hydrolases superfamily.

It catalyses the reaction L-fucono-1,5-lactone + H2O = L-fuconate + H(+). The catalysed reaction is L-fucono-1,4-lactone + H2O = L-fuconate + H(+). The enzyme catalyses D-arabinono-1,4-lactone + H2O = D-arabinonate + H(+). It carries out the reaction L-xylono-1,4-lactone + H2O = L-xylonate + H(+). It catalyses the reaction L-galactono-1,4-lactone + H2O = L-galactonate + H(+). Catalyzes the hydrolysis of L-fucono-1,5-lactone to L-fuconate. Can also hydrolyze L-fucono-1,4-lactone, L-galactono-1,4-lactone D-arabinono-1,4-lactone and L-xylono-1,4-lactone. This chain is L-fucono-1,5-lactonase, found in Burkholderia ambifaria (strain ATCC BAA-244 / DSM 16087 / CCUG 44356 / LMG 19182 / AMMD) (Burkholderia cepacia (strain AMMD)).